Here is a 484-residue protein sequence, read N- to C-terminus: E-selectin (484 aa).

A signal peptide spans 1 to 22 (MIASQFLSALPLVLLLLRESGA). The C-type lectin domain maps to 23–140 (WSYSASTETM…CSKKKLALCY (118 aa)). The Extracellular portion of the chain corresponds to 23–429 (WSYSASTETM…CEAPAESKIP (407 aa)). 14 disulfide bridges follow: cysteine 41–cysteine 139, cysteine 112–cysteine 131, cysteine 144–cysteine 155, cysteine 149–cysteine 164, cysteine 166–cysteine 175, cysteine 181–cysteine 222, cysteine 194–cysteine 204, cysteine 208–cysteine 235, cysteine 240–cysteine 285, cysteine 271–cysteine 298, cysteine 303–cysteine 348, cysteine 334–cysteine 361, cysteine 366–cysteine 407, and cysteine 393–cysteine 420. N-linked (GlcNAc...) asparagine glycans are attached at residues asparagine 61, asparagine 65, and asparagine 79. Ca(2+)-binding residues include glutamate 102, asparagine 104, and glutamate 110. Residues 102-110 (EPNNKQSNE), 114-119 (EIYIKR), and 127-129 (NDE) each bind a carbohydrate. Residues asparagine 127 and aspartate 128 each contribute to the Ca(2+) site. One can recognise an EGF-like domain in the interval 141–176 (TAACTPTSCSGHGECIETINSSTCQCYPGFRGLQCE). N-linked (GlcNAc...) asparagine glycosylation is present at asparagine 160. 4 Sushi domains span residues 179–237 (VECD…TCKA), 251–300 (VSCN…VCKA), 301–363 (VKCP…SCQV), and 364–422 (VQCS…TCEA). Asparagine 201 carries an N-linked (GlcNAc...) asparagine glycan. N-linked (GlcNAc...) asparagine glycosylation occurs at asparagine 254. Residues asparagine 376 and asparagine 400 are each glycosylated (N-linked (GlcNAc...) asparagine). A helical transmembrane segment spans residues 430–451 (LAMGLAAGGVSFMTSASFLLWL). The Cytoplasmic segment spans residues 452 to 484 (LKRLRKRAKKFVPSSSSECLQPNGSYQMPSDLI).

Belongs to the selectin/LECAM family. Interacts with SELPLG/PSGL1 and PODXL2 through the sialyl Lewis X epitope. SELPLG sulfation appears not to be required for this interaction.

The protein resides in the cell membrane. In terms of biological role, cell-surface glycoprotein having a role in immunoadhesion. Mediates in the adhesion of blood neutrophils in cytokine-activated endothelium through interaction with SELPLG/PSGL1. May have a role in capillary morphogenesis. The sequence is that of E-selectin (SELE) from Sus scrofa (Pig).